The sequence spans 259 residues: UPF0246 protein PSPPH_1119 (259 aa).

It belongs to the UPF0246 family.

In Pseudomonas savastanoi pv. phaseolicola (strain 1448A / Race 6) (Pseudomonas syringae pv. phaseolicola (strain 1448A / Race 6)), this protein is UPF0246 protein PSPPH_1119.